We begin with the raw amino-acid sequence, 539 residues long: Peptide chain release factor 3 (539 aa).

In terms of domain architecture, tr-type G spans 14–283; that stretch reads EKRRNFAIIS…AFLEYALQPE (270 aa). GTP is bound by residues 23–30, 91–95, and 145–148; these read SHPDAGKT, DTPGH, and NKLD.

Belongs to the TRAFAC class translation factor GTPase superfamily. Classic translation factor GTPase family. PrfC subfamily.

The protein localises to the cytoplasm. In terms of biological role, increases the formation of ribosomal termination complexes and stimulates activities of RF-1 and RF-2. It binds guanine nucleotides and has strong preference for UGA stop codons. It may interact directly with the ribosome. The stimulation of RF-1 and RF-2 is significantly reduced by GTP and GDP, but not by GMP. This Rippkaea orientalis (strain PCC 8801 / RF-1) (Cyanothece sp. (strain PCC 8801)) protein is Peptide chain release factor 3.